A 1205-amino-acid polypeptide reads, in one-letter code: Chromosome partition protein Smc (1205 aa).

32–39 (PNGSGKSN) provides a ligand contact to ATP. Coiled-coil stretches lie at residues 169 to 288 (KHRK…SIQH) and 330 to 499 (EELE…GLQR). One can recognise an SMC hinge domain in the interval 514-628 (GLFGSIAQLV…VNDLTEAMGL (115 aa)). 3 coiled-coil regions span residues 661–771 (LEVT…AQET), 802–836 (AVRT…RAQQ), and 979–1033 (DRVT…KDLL).

Belongs to the SMC family. In terms of assembly, homodimer.

The protein localises to the cytoplasm. Required for chromosome condensation and partitioning. This is Chromosome partition protein Smc from Mycobacterium tuberculosis (strain ATCC 25618 / H37Rv).